We begin with the raw amino-acid sequence, 28 residues long: Humanin-like 4 (28 aa).

The protein belongs to the humanin family. In terms of tissue distribution, highly expressed in testis. Also expressed in kidney, heart, skeletal muscles and brain.

It is found in the secreted. The protein localises to the cytoplasm. Functionally, plays a role as a neuroprotective and antiapoptotic factor. In Homo sapiens (Human), this protein is Humanin-like 4.